The primary structure comprises 616 residues: Protein cereblon (616 aa).

Disordered regions lie at residues Met1 to Val39, Phe63 to Arg137, and Ser182 to Met220. A compositionally biased stretch (low complexity) spans Ala11–Val32. Positions Ser96–Glu107 are enriched in acidic residues. The span at Gln183–Asp192 shows a compositional bias: basic and acidic residues. Residues Val194–Leu203 are compositionally biased toward acidic residues. Residues His206–Pro215 show a composition bias toward pro residues. In terms of domain architecture, Lon N-terminal spans His257 to Thr482. Residues Glu481 to Lys590 enclose the CULT domain. Residues Cys486, Cys489, Cys555, and Cys558 each contribute to the Zn(2+) site.

The protein belongs to the CRBN family. As to quaternary structure, likely a component of a DCX (DDB1-CUL4-X-box) protein ligase complex. May interact with pic/DDB1. Post-translationally, ubiquitinated.

The protein localises to the nucleus. Its pathway is protein modification; protein ubiquitination. In terms of biological role, substrate recognition component of a DCX (DDB1-CUL4-X-box) E3 protein ligase complex that mediates the ubiquitination and subsequent proteasomal degradation of target proteins. Has an essential role in mediating growth by negatively regulating insulin signaling. It also has a role in maintaining presynaptic function in the neuromuscular junction synapses of third-instar larvae. This Drosophila persimilis (Fruit fly) protein is Protein cereblon.